Reading from the N-terminus, the 471-residue chain is Light-independent protochlorophyllide reductase subunit N (471 aa).

Cys-22, Cys-47, and Cys-107 together coordinate [4Fe-4S] cluster.

It belongs to the BchN/ChlN family. As to quaternary structure, protochlorophyllide reductase is composed of three subunits; ChlL, ChlN and ChlB. Forms a heterotetramer of two ChlB and two ChlN subunits. [4Fe-4S] cluster serves as cofactor.

The protein resides in the plastid. Its subcellular location is the chloroplast. It carries out the reaction chlorophyllide a + oxidized 2[4Fe-4S]-[ferredoxin] + 2 ADP + 2 phosphate = protochlorophyllide a + reduced 2[4Fe-4S]-[ferredoxin] + 2 ATP + 2 H2O. It functions in the pathway porphyrin-containing compound metabolism; chlorophyll biosynthesis (light-independent). Component of the dark-operative protochlorophyllide reductase (DPOR) that uses Mg-ATP and reduced ferredoxin to reduce ring D of protochlorophyllide (Pchlide) to form chlorophyllide a (Chlide). This reaction is light-independent. The NB-protein (ChlN-ChlB) is the catalytic component of the complex. This chain is Light-independent protochlorophyllide reductase subunit N, found in Anthoceros angustus (Hornwort).